The chain runs to 63 residues: Venom peptide U-reduvitoxin-Pp19 (63 aa).

The first 23 residues, 1-23 (MSPYSILFVVVIALCLLPESIVG), serve as a signal peptide directing secretion. 3 disulfides stabilise this stretch: Cys15-Cys62, Cys25-Cys53, and Cys30-Cys61.

In terms of tissue distribution, hemolymph (at protein level). Also weakly expressed by the venom gland (at protein level).

The protein resides in the secreted. Its function is as follows. Toxin with insecticidal activity. High doses of recombinant toxin causes impaired motor behavior of D.melanogaster, which progress slowly to paralysis and death after several hours. This chain is Venom peptide U-reduvitoxin-Pp19, found in Pristhesancus plagipennis (Common assassin bug).